The sequence spans 201 residues: Ribosome maturation factor RimM (201 aa).

The PRC barrel domain maps to 92-166 (DEDEFYHADL…RVVVEPPANF (75 aa)). The tract at residues 169 to 201 (PAGPQPAEGEEMPDGALEALEGEEAGAGTAPQP) is disordered.

The protein belongs to the RimM family. In terms of assembly, binds ribosomal protein uS19.

It is found in the cytoplasm. An accessory protein needed during the final step in the assembly of 30S ribosomal subunit, possibly for assembly of the head region. Essential for efficient processing of 16S rRNA. May be needed both before and after RbfA during the maturation of 16S rRNA. It has affinity for free ribosomal 30S subunits but not for 70S ribosomes. The sequence is that of Ribosome maturation factor RimM from Rhodospirillum centenum (strain ATCC 51521 / SW).